A 154-amino-acid polypeptide reads, in one-letter code: Superoxide dismutase [Cu-Zn] (154 aa).

Histidine 47, histidine 49, and histidine 64 together coordinate Cu cation. Cysteine 58 and cysteine 147 are joined by a disulfide. Residues histidine 64, histidine 72, histidine 81, and aspartate 84 each contribute to the Zn(2+) site. Position 121 (histidine 121) interacts with Cu cation. Arginine 144 contacts substrate.

It belongs to the Cu-Zn superoxide dismutase family. As to quaternary structure, homodimer. Cu cation serves as cofactor. The cofactor is Zn(2+).

It localises to the cytoplasm. The enzyme catalyses 2 superoxide + 2 H(+) = H2O2 + O2. In terms of biological role, destroys radicals which are normally produced within the cells and which are toxic to biological systems. The sequence is that of Superoxide dismutase [Cu-Zn] (sod1) from Schizosaccharomyces pombe (strain 972 / ATCC 24843) (Fission yeast).